The sequence spans 1134 residues: Protocadherin 18 (1134 aa).

The N-terminal stretch at 1-27 (MHQMNTKMHFRFALALLMAFFSHDVLA) is a signal peptide. Cadherin domains lie at 28–137 (KNLK…SPQF), 138–246 (SRPV…SPAF), 247–354 (EQPS…KPEI), 361–465 (PGKE…PPRF), 466–576 (QRSR…VPVV), and 582–688 (HNNT…STAM). The Extracellular portion of the chain corresponds to 28-699 (KNLKYRIYEE…SVSRASLDVS (672 aa)). N-linked (GlcNAc...) asparagine glycosylation occurs at Asn103. Asn269 is a glycosylation site (N-linked (GlcNAc...) asparagine). Asn559 is a glycosylation site (N-linked (GlcNAc...) asparagine). The chain crosses the membrane as a helical span at residues 700–720 (MIIIISLGAICAVLLVIMVLF). The Cytoplasmic portion of the chain corresponds to 721 to 1134 (ATRCNREKKD…NKLLQDVRQS (414 aa)). Disordered regions lie at residues 769–800 (LPIR…NSHQ), 868–888 (SLKD…DLGR), 941–1004 (DYRS…SSLL), and 1022–1083 (FSEC…PSSK). Residues 791 to 800 (GSRQSHNSHQ) are compositionally biased toward polar residues. Residues 868–877 (SLKDSGRGDS) are compositionally biased toward basic and acidic residues. Residues 892–1134 (IDRLLGEGFS…NKLLQDVRQS (243 aa)) are interaction with DAB1. Basic and acidic residues predominate over residues 1027–1038 (EGDRSNSLERRK). A compositionally biased stretch (polar residues) spans 1059-1082 (THFQNPTSSSGTPLGTHSSVQPSS).

Interacts with DAB1. In terms of tissue distribution, predominantly expressed in kidney and lung.

It localises to the cell membrane. Potential calcium-dependent cell-adhesion protein. This is Protocadherin 18 (Pcdh18) from Mus musculus (Mouse).